Here is a 262-residue protein sequence, read N- to C-terminus: 5'-nucleotidase SurE (262 aa).

Positions 11, 12, 43, and 101 each coordinate a divalent metal cation.

Belongs to the SurE nucleotidase family. The cofactor is a divalent metal cation.

Its subcellular location is the cytoplasm. It carries out the reaction a ribonucleoside 5'-phosphate + H2O = a ribonucleoside + phosphate. In terms of biological role, nucleotidase that shows phosphatase activity on nucleoside 5'-monophosphates. In Prochlorococcus marinus (strain NATL2A), this protein is 5'-nucleotidase SurE.